Reading from the N-terminus, the 523-residue chain is Protein nucleotidyltransferase YdiU (523 aa).

8 residues coordinate ATP: glycine 101, glycine 103, arginine 104, lysine 128, aspartate 140, glycine 141, arginine 198, and arginine 205. The active-site Proton acceptor is the aspartate 275. Residues asparagine 276 and aspartate 285 each coordinate Mg(2+). Position 285 (aspartate 285) interacts with ATP.

The protein belongs to the SELO family. Mg(2+) serves as cofactor. Mn(2+) is required as a cofactor.

It carries out the reaction L-seryl-[protein] + ATP = 3-O-(5'-adenylyl)-L-seryl-[protein] + diphosphate. The enzyme catalyses L-threonyl-[protein] + ATP = 3-O-(5'-adenylyl)-L-threonyl-[protein] + diphosphate. It catalyses the reaction L-tyrosyl-[protein] + ATP = O-(5'-adenylyl)-L-tyrosyl-[protein] + diphosphate. The catalysed reaction is L-histidyl-[protein] + UTP = N(tele)-(5'-uridylyl)-L-histidyl-[protein] + diphosphate. It carries out the reaction L-seryl-[protein] + UTP = O-(5'-uridylyl)-L-seryl-[protein] + diphosphate. The enzyme catalyses L-tyrosyl-[protein] + UTP = O-(5'-uridylyl)-L-tyrosyl-[protein] + diphosphate. In terms of biological role, nucleotidyltransferase involved in the post-translational modification of proteins. It can catalyze the addition of adenosine monophosphate (AMP) or uridine monophosphate (UMP) to a protein, resulting in modifications known as AMPylation and UMPylation. This chain is Protein nucleotidyltransferase YdiU, found in Aromatoleum aromaticum (strain DSM 19018 / LMG 30748 / EbN1) (Azoarcus sp. (strain EbN1)).